The chain runs to 414 residues: Esterase FrsA (414 aa).

The protein belongs to the FrsA family.

It catalyses the reaction a carboxylic ester + H2O = an alcohol + a carboxylate + H(+). Its function is as follows. Catalyzes the hydrolysis of esters. This Shigella sonnei (strain Ss046) protein is Esterase FrsA.